We begin with the raw amino-acid sequence, 465 residues long: MSEAVPTSARKSKNAPVAPGPAPVLEIESLDMEARGVGRTMTEDGEPGKVIFVEGALPGERVTYSSYRRKPSYEQATVVDILRPSVMRTQPKCTFFGTCGGCSMQHLDMRAQVAVKQRVLEDNLWHLAKLRAETMFAPIHGPSWGYRYRARLTVRNVAKKGGVLVGFHEKKSSYVADMTSCEVLPPHVSAMLVPLRRLVEGLSIRDRMPQIELAVGSTVTALVLRVLEPINADDEALLRAFADEHKVQFWLQPKGPDTVTPFYPLDVSLDYTLPEFGIRMPFKPTDFTQVNHQINRVLVGRALRLLAPSRDDRVLDLFCGIGNFTLPLARLSREVMGIEGSDTLTTRALANARENGVDGHTTFACRNLFEVTGDDLRALGAFDKFLIDPPREGALAVSKALAEIAQSGAGPLPKRIVYVSCNPSTLARDAGLLVHEAGYRLKGAGVVNMFPNTSHVESIALFERD.

Positions 1 to 22 are disordered; that stretch reads MSEAVPTSARKSKNAPVAPGPA. Residues 16–80 enclose the TRAM domain; that stretch reads PVAPGPAPVL…PSYEQATVVD (65 aa). Positions 93, 99, 102, and 181 each coordinate [4Fe-4S] cluster. Residues glutamine 289, phenylalanine 318, asparagine 323, glutamate 339, asparagine 367, and aspartate 388 each coordinate S-adenosyl-L-methionine. Catalysis depends on cysteine 421, which acts as the Nucleophile.

The protein belongs to the class I-like SAM-binding methyltransferase superfamily. RNA M5U methyltransferase family. RlmD subfamily.

The enzyme catalyses uridine(1939) in 23S rRNA + S-adenosyl-L-methionine = 5-methyluridine(1939) in 23S rRNA + S-adenosyl-L-homocysteine + H(+). Its function is as follows. Catalyzes the formation of 5-methyl-uridine at position 1939 (m5U1939) in 23S rRNA. In Burkholderia cenocepacia (strain HI2424), this protein is 23S rRNA (uracil(1939)-C(5))-methyltransferase RlmD.